A 122-amino-acid chain; its full sequence is Large ribosomal subunit protein uL14 (122 aa).

It belongs to the universal ribosomal protein uL14 family. In terms of assembly, part of the 50S ribosomal subunit. Forms a cluster with proteins L3 and L19. In the 70S ribosome, L14 and L19 interact and together make contacts with the 16S rRNA in bridges B5 and B8.

Functionally, binds to 23S rRNA. Forms part of two intersubunit bridges in the 70S ribosome. This is Large ribosomal subunit protein uL14 from Mycolicibacterium vanbaalenii (strain DSM 7251 / JCM 13017 / BCRC 16820 / KCTC 9966 / NRRL B-24157 / PYR-1) (Mycobacterium vanbaalenii).